The chain runs to 500 residues: NAD(P)H-quinone oxidoreductase chain 4, chloroplastic (500 aa).

Transmembrane regions (helical) follow at residues 4–24 (FPWL…IFFL), 35–55 (YTIC…CYHF), 87–107 (IGPV…AWPV), 113–130 (LFHF…GSFS), 134–154 (LLLF…LLSM), 167–187 (FILY…GVGL), 207–227 (VALE…KLPI), 242–262 (HYST…YGLI), 272–292 (AHSI…IYAA), 305–325 (IAYS…SITD), 330–350 (GAIL…FLAG), 386–406 (LALP…GIIT), 416–436 (IVIT…LLSM), and 462–482 (LFVS…PDFV).

It belongs to the complex I subunit 4 family.

It localises to the plastid. The protein resides in the chloroplast thylakoid membrane. It carries out the reaction a plastoquinone + NADH + (n+1) H(+)(in) = a plastoquinol + NAD(+) + n H(+)(out). It catalyses the reaction a plastoquinone + NADPH + (n+1) H(+)(in) = a plastoquinol + NADP(+) + n H(+)(out). This chain is NAD(P)H-quinone oxidoreductase chain 4, chloroplastic, found in Guizotia abyssinica (Niger).